Consider the following 204-residue polypeptide: Holliday junction branch migration complex subunit RuvA (204 aa).

Positions 1 to 64 (MIGRLQGILL…EDAHLLFGFA (64 aa)) are domain I. The segment at 65 to 143 (QKTDRTLFRE…GVKQSDFFVE (79 aa)) is domain II. The flexible linker stretch occupies residues 144 to 155 (STHIPLSPSIES). The tract at residues 156 to 204 (HSESSSDEAISALIALGYKPAEAEKMVKRVAKPELTSEQVIREALKAAL) is domain III.

It belongs to the RuvA family. In terms of assembly, homotetramer. Forms an RuvA(8)-RuvB(12)-Holliday junction (HJ) complex. HJ DNA is sandwiched between 2 RuvA tetramers; dsDNA enters through RuvA and exits via RuvB. An RuvB hexamer assembles on each DNA strand where it exits the tetramer. Each RuvB hexamer is contacted by two RuvA subunits (via domain III) on 2 adjacent RuvB subunits; this complex drives branch migration. In the full resolvosome a probable DNA-RuvA(4)-RuvB(12)-RuvC(2) complex forms which resolves the HJ.

It is found in the cytoplasm. The RuvA-RuvB-RuvC complex processes Holliday junction (HJ) DNA during genetic recombination and DNA repair, while the RuvA-RuvB complex plays an important role in the rescue of blocked DNA replication forks via replication fork reversal (RFR). RuvA specifically binds to HJ cruciform DNA, conferring on it an open structure. The RuvB hexamer acts as an ATP-dependent pump, pulling dsDNA into and through the RuvAB complex. HJ branch migration allows RuvC to scan DNA until it finds its consensus sequence, where it cleaves and resolves the cruciform DNA. This chain is Holliday junction branch migration complex subunit RuvA, found in Haemophilus influenzae (strain PittGG).